The primary structure comprises 992 residues: Disks large-associated protein 4 (992 aa).

Positions 1-20 are enriched in basic and acidic residues; the sequence is MKGLGDSRPRHLSDSLDPPH. Disordered regions lie at residues 1–31 and 154–226; these read MKGLGDSRPRHLSDSLDPPHEPLFAGPDRNP and APSM…ASGL. The span at 162–171 shows a compositional bias: gly residues; sequence GKVGGNGGKK. Residues 172–194 are compositionally biased toward basic and acidic residues; that stretch reads GVLEDGKGRRAKSKERAKAGEPK. A compositionally biased stretch (polar residues) spans 199 to 208; the sequence is SNISGWWSSD. Ser206 and Ser207 each carry phosphoserine. Arg290 is subject to Omega-N-methylarginine. 5 disordered regions span residues 342 to 435, 527 to 665, 677 to 751, 763 to 798, and 915 to 992; these read TTLL…SWEE, SVSL…RKLS, VPKE…GPRQ, SYGDNSDPALEASSLPPPDPWMETSSSSPAEPAQPG, and TPEK…QTRL. Phosphoserine is present on residues Ser377, Ser380, Ser384, Ser388, Ser405, Ser415, and Ser421. Residues 399-413 show a composition bias toward polar residues; the sequence is LRATQQSLGEQSNPR. Residues 528 to 554 are compositionally biased toward low complexity; sequence VSLQSLSPPPSTGSLSNSRTLPSSSCL. The span at 576-591 shows a compositional bias: polar residues; the sequence is VTVQSSTESAQDTYLD. A phosphoserine mark is found at Ser580, Ser581, Ser609, Ser611, Ser665, and Ser744. The span at 600-620 shows a compositional bias: low complexity; sequence TSQSGLSNSSDSLDSSTRPPS. Thr915 carries the phosphothreonine modification. Basic and acidic residues-rich tracts occupy residues 915-925 and 940-958; these read TPEKRKEEKKP and VSRDKASDAGDKQRQEARK. Positions 969–978 are enriched in polar residues; the sequence is VRQNSATESA. Phosphoserine is present on Ser973.

Belongs to the SAPAP family. In terms of assembly, interacts with DLG1 and DLG4/PSD-95. As to expression, expressed in brain.

It is found in the membrane. In terms of biological role, may play a role in the molecular organization of synapses and neuronal cell signaling. Could be an adapter protein linking ion channel to the subsynaptic cytoskeleton. May induce enrichment of PSD-95/SAP90 at the plasma membrane. This Rattus norvegicus (Rat) protein is Disks large-associated protein 4 (Dlgap4).